Consider the following 292-residue polypeptide: 4-hydroxy-tetrahydrodipicolinate synthase (292 aa).

Thr-45 provides a ligand contact to pyruvate. The Proton donor/acceptor role is filled by Tyr-133. The Schiff-base intermediate with substrate role is filled by Lys-161. Ile-203 provides a ligand contact to pyruvate.

Belongs to the DapA family. In terms of assembly, homotetramer; dimer of dimers.

The protein localises to the cytoplasm. The enzyme catalyses L-aspartate 4-semialdehyde + pyruvate = (2S,4S)-4-hydroxy-2,3,4,5-tetrahydrodipicolinate + H2O + H(+). Its pathway is amino-acid biosynthesis; L-lysine biosynthesis via DAP pathway; (S)-tetrahydrodipicolinate from L-aspartate: step 3/4. Functionally, catalyzes the condensation of (S)-aspartate-beta-semialdehyde [(S)-ASA] and pyruvate to 4-hydroxy-tetrahydrodipicolinate (HTPA). The sequence is that of 4-hydroxy-tetrahydrodipicolinate synthase from Nitrosomonas eutropha (strain DSM 101675 / C91 / Nm57).